Reading from the N-terminus, the 558-residue chain is Potassium-transporting ATPase potassium-binding subunit (558 aa).

A run of 11 helical transmembrane segments spans residues Met1–His21, Pro59–Leu79, Phe85–Val105, Gly130–Val150, Leu179–Phe199, Pro245–Pro265, Thr279–Phe299, Gly374–Gly394, Ile416–Val436, Ala484–Ala504, and Phe527–Leu547.

It belongs to the KdpA family. As to quaternary structure, the system is composed of three essential subunits: KdpA, KdpB and KdpC.

It localises to the cell membrane. In terms of biological role, part of the high-affinity ATP-driven potassium transport (or Kdp) system, which catalyzes the hydrolysis of ATP coupled with the electrogenic transport of potassium into the cytoplasm. This subunit binds the extracellular potassium ions and delivers the ions to the membrane domain of KdpB through an intramembrane tunnel. This Clavibacter michiganensis subsp. michiganensis (strain NCPPB 382) protein is Potassium-transporting ATPase potassium-binding subunit.